Here is a 302-residue protein sequence, read N- to C-terminus: Putative gluconeogenesis factor (302 aa).

Belongs to the gluconeogenesis factor family.

The protein localises to the cytoplasm. Its function is as follows. Required for morphogenesis under gluconeogenic growth conditions. This Salmonella typhi protein is Putative gluconeogenesis factor (ybhK).